Reading from the N-terminus, the 452-residue chain is GTPase Der (452 aa).

2 EngA-type G domains span residues 4–169 and 177–352; these read PVVA…PPAA and IKVA…ESHR. GTP is bound by residues 10-17, 57-61, 120-123, 183-190, 230-234, and 295-298; these read GRPNVGKS, DTGGL, NKCE, DTAGI, and NKWD. Positions 353–438 constitute a KH-like domain; the sequence is RRVSTSVIND…PIRLIWRGKP (86 aa).

It belongs to the TRAFAC class TrmE-Era-EngA-EngB-Septin-like GTPase superfamily. EngA (Der) GTPase family. Associates with the 50S ribosomal subunit.

GTPase that plays an essential role in the late steps of ribosome biogenesis. The chain is GTPase Der from Microcystis aeruginosa (strain NIES-843 / IAM M-2473).